The primary structure comprises 259 residues: 5'-nucleotidase SurE (259 aa).

Asp-10, Asp-11, Ser-41, and Asn-96 together coordinate a divalent metal cation.

It belongs to the SurE nucleotidase family. It depends on a divalent metal cation as a cofactor.

The protein localises to the cytoplasm. It carries out the reaction a ribonucleoside 5'-phosphate + H2O = a ribonucleoside + phosphate. Its function is as follows. Nucleotidase that shows phosphatase activity on nucleoside 5'-monophosphates. This is 5'-nucleotidase SurE from Wolinella succinogenes (strain ATCC 29543 / DSM 1740 / CCUG 13145 / JCM 31913 / LMG 7466 / NCTC 11488 / FDC 602W) (Vibrio succinogenes).